The primary structure comprises 348 residues: Propane 2-monooxygenase, reductase component (348 aa).

A 2Fe-2S ferredoxin-type domain is found at 5–95 (HKINFDPVDI…DCTIELLNFD (91 aa)). Cys39, Cys44, Cys47, and Cys79 together coordinate [2Fe-2S] cluster. One can recognise an FAD-binding FR-type domain in the interval 105-206 (IQDVRTQVQA…TGPYGSFTLK (102 aa)).

Belongs to the bacterial ring-hydroxylating dioxygenase ferredoxin reductase family. In terms of assembly, the propane 2-monooxygenase multicomponent enzyme system is composed of an electron transfer component and a monooxygenase component interacting with the effector protein MimD. The electron transfer component is composed of a reductase (MimB), and the monooxygenase component is formed by a large subunit (MimA) and a small subunit (MimC). The cofactor is FAD. It depends on [2Fe-2S] cluster as a cofactor.

Reductase component of the propane 2-monooxygenase multicomponent enzyme system which is involved in the degradation of propane via the O2-dependent hydroxylation of propane. Reductase catalyzes the transfer of electrons from NADH or NADPH to monooxygenase. The polypeptide is Propane 2-monooxygenase, reductase component (Mycolicibacterium smegmatis (strain ATCC 700084 / mc(2)155) (Mycobacterium smegmatis)).